The sequence spans 829 residues: Telomere length regulation protein TEL2 homolog (829 aa).

2 disordered regions span residues 446–493 and 620–641; these read SADF…DDLV and SEKP…PHSI. Residues 456 to 466 show a composition bias toward low complexity; that stretch reads SSPSKSPLSSP. Positions 467–480 are enriched in basic and acidic residues; that stretch reads EVREKSKVKVKADQ. The segment covering 482–493 has biased composition (acidic residues); the sequence is SDSDLDSDDDLV. The segment covering 629–641 has biased composition (polar residues); that stretch reads AESGSVNTDPHSI.

Belongs to the TEL2 family.

Its subcellular location is the cytoplasm. It localises to the membrane. The protein resides in the nucleus. The protein localises to the chromosome. It is found in the telomere. Regulator of the DNA damage response (DDR). Part of the TTT complex that is required to stabilize protein levels of the phosphatidylinositol 3-kinase-related protein kinase (PIKK) family proteins. Promotes assembly, stabilizes and maintains the activity of TORC complexes, which regulate cell growth and survival in response to nutrient and hormonal signals. May be involved in telomere length regulation. The polypeptide is Telomere length regulation protein TEL2 homolog (telo2) (Xenopus tropicalis (Western clawed frog)).